A 264-amino-acid polypeptide reads, in one-letter code: 3-methyl-2-oxobutanoate hydroxymethyltransferase (264 aa).

Mg(2+)-binding residues include D45 and D84. 3-methyl-2-oxobutanoate-binding positions include 45 to 46, D84, and K112; that span reads DS. E114 serves as a coordination point for Mg(2+). The Proton acceptor role is filled by E181.

This sequence belongs to the PanB family. As to quaternary structure, homodecamer; pentamer of dimers. It depends on Mg(2+) as a cofactor.

The protein resides in the cytoplasm. The enzyme catalyses 3-methyl-2-oxobutanoate + (6R)-5,10-methylene-5,6,7,8-tetrahydrofolate + H2O = 2-dehydropantoate + (6S)-5,6,7,8-tetrahydrofolate. It functions in the pathway cofactor biosynthesis; (R)-pantothenate biosynthesis; (R)-pantoate from 3-methyl-2-oxobutanoate: step 1/2. Catalyzes the reversible reaction in which hydroxymethyl group from 5,10-methylenetetrahydrofolate is transferred onto alpha-ketoisovalerate to form ketopantoate. The sequence is that of 3-methyl-2-oxobutanoate hydroxymethyltransferase from Escherichia coli O81 (strain ED1a).